The following is a 506-amino-acid chain: 2,3-bisphosphoglycerate-independent phosphoglycerate mutase (506 aa).

The Mn(2+) site is built by Asp-13 and Ser-63. Ser-63 functions as the Phosphoserine intermediate in the catalytic mechanism. Substrate-binding positions include His-124, 153 to 154 (RD), Arg-183, Arg-189, 254 to 257 (RADR), and Lys-330. Asp-396, His-400, Asp-437, His-438, and His-456 together coordinate Mn(2+).

The protein belongs to the BPG-independent phosphoglycerate mutase family. Monomer. Mn(2+) serves as cofactor.

It carries out the reaction (2R)-2-phosphoglycerate = (2R)-3-phosphoglycerate. Its pathway is carbohydrate degradation; glycolysis; pyruvate from D-glyceraldehyde 3-phosphate: step 3/5. Functionally, catalyzes the interconversion of 2-phosphoglycerate and 3-phosphoglycerate. The chain is 2,3-bisphosphoglycerate-independent phosphoglycerate mutase from Cereibacter sphaeroides (strain ATCC 17029 / ATH 2.4.9) (Rhodobacter sphaeroides).